We begin with the raw amino-acid sequence, 430 residues long: Adenylosuccinate synthetase (430 aa).

GTP is bound by residues 11–17 (GDEGKGK) and 39–41 (GHS). Asp-12 functions as the Proton acceptor in the catalytic mechanism. The Mg(2+) site is built by Asp-12 and Gly-39. Residues 12–15 (DEGK), 37–40 (NAGH), Thr-129, Arg-143, Asn-221, Thr-236, and Arg-300 contribute to the IMP site. His-40 (proton donor) is an active-site residue. 296–302 (VSTGRKR) serves as a coordination point for substrate. Residues Arg-302, 328 to 330 (KLD), and 412 to 414 (GTG) each bind GTP.

The protein belongs to the adenylosuccinate synthetase family. In terms of assembly, homodimer. Mg(2+) serves as cofactor.

The protein resides in the cytoplasm. It carries out the reaction IMP + L-aspartate + GTP = N(6)-(1,2-dicarboxyethyl)-AMP + GDP + phosphate + 2 H(+). Its pathway is purine metabolism; AMP biosynthesis via de novo pathway; AMP from IMP: step 1/2. Its function is as follows. Plays an important role in the de novo pathway and in the salvage pathway of purine nucleotide biosynthesis. Catalyzes the first committed step in the biosynthesis of AMP from IMP. The chain is Adenylosuccinate synthetase from Neurospora crassa (strain ATCC 24698 / 74-OR23-1A / CBS 708.71 / DSM 1257 / FGSC 987).